Here is a 712-residue protein sequence, read N- to C-terminus: Ribosomal RNA large subunit methyltransferase K/L (712 aa).

One can recognise a THUMP domain in the interval 46–157 (GAYQALLHSR…RENMVVSLDL (112 aa)).

Belongs to the methyltransferase superfamily. RlmKL family.

The protein localises to the cytoplasm. The enzyme catalyses guanosine(2445) in 23S rRNA + S-adenosyl-L-methionine = N(2)-methylguanosine(2445) in 23S rRNA + S-adenosyl-L-homocysteine + H(+). It catalyses the reaction guanosine(2069) in 23S rRNA + S-adenosyl-L-methionine = N(2)-methylguanosine(2069) in 23S rRNA + S-adenosyl-L-homocysteine + H(+). Specifically methylates the guanine in position 2445 (m2G2445) and the guanine in position 2069 (m7G2069) of 23S rRNA. The chain is Ribosomal RNA large subunit methyltransferase K/L from Actinobacillus pleuropneumoniae serotype 3 (strain JL03).